We begin with the raw amino-acid sequence, 255 residues long: Coiled-coil domain-containing 92B (255 aa).

A coiled-coil region spans residues 28-90; sequence LRDLHLEILR…AAANAELRRE (63 aa). Positions 149–255 are disordered; it reads QRLQAPRPGP…SQPSAPGDPE (107 aa). Residues 166–177 are compositionally biased toward basic residues; that stretch reads PRRRALRARRPP. The segment covering 242 to 255 has biased composition (pro residues); that stretch reads QPAPSQPSAPGDPE.

In Homo sapiens (Human), this protein is Coiled-coil domain-containing 92B.